We begin with the raw amino-acid sequence, 372 residues long: N-methyl-L-tryptophan oxidase (372 aa).

Residue 4 to 34 coordinates FAD; the sequence is DLIIIGSGSVGAAAGYYATRAGLNVLMTDAH. C308 is subject to S-8alpha-FAD cysteine.

The protein belongs to the MSOX/MTOX family. MTOX subfamily. Monomer. Requires FAD as cofactor.

The catalysed reaction is N(alpha)-methyl-L-tryptophan + O2 + H2O = L-tryptophan + formaldehyde + H2O2. Catalyzes the oxidative demethylation of N-methyl-L-tryptophan. This is N-methyl-L-tryptophan oxidase from Escherichia coli (strain K12 / DH10B).